The chain runs to 609 residues: Phosphatidylinositol N-acetylglucosaminyltransferase subunit GPI1 (609 aa).

Over 1 to 186 (MPNYIFWPYE…STCIYKMVAK (186 aa)) the chain is Extracellular. A helical transmembrane segment spans residues 187 to 207 (IGFYLTFVICSIASLVSSLLN). Residues 208–280 (YSHFQLVNYS…FYPDYILLYN (73 aa)) lie on the Cytoplasmic side of the membrane. A helical membrane pass occupies residues 281-301 (TIWLIINDISFGLILGAILIE). The Extracellular segment spans residues 302–380 (NRDFLVSASH…LSSLLTLTIY (79 aa)). Residues 381 to 401 (MMFLVGFSFAVSLAIDFFAIL) form a helical membrane-spanning segment. The Cytoplasmic portion of the chain corresponds to 402–451 (SFPIYVFYRISSKLYHCQLNIMASLFNLFCGKKRNVLRNRIDHNYFQLDQ). The chain crosses the membrane as a helical span at residues 452 to 472 (LLLGTLLFIILVFLTPTVMAF). Residues 473 to 485 (YMSYTVLRMLTIT) lie on the Extracellular side of the membrane. Residues 486 to 506 (IEIFSEAVIALINHFPLFALL) traverse the membrane as a helical segment. At 507–609 (LRLKDPKRLP…DLYKRLTIQA (103 aa)) the chain is on the cytoplasmic side.

The protein belongs to the PIGQ family. Component of the phosphatidylinositol N-acetylglucosaminyltransferase (GPI-GlcNAc transferase) complex composed of at least GPI1, GPI2, GPI3, GPI15, GPI19 and ERI1.

It localises to the membrane. The enzyme catalyses a 1,2-diacyl-sn-glycero-3-phospho-(1D-myo-inositol) + UDP-N-acetyl-alpha-D-glucosamine = a 6-(N-acetyl-alpha-D-glucosaminyl)-1-(1,2-diacyl-sn-glycero-3-phospho)-1D-myo-inositol + UDP + H(+). It participates in glycolipid biosynthesis; glycosylphosphatidylinositol-anchor biosynthesis. Part of the complex catalyzing the transfer of N-acetylglucosamine from UDP-N-acetylglucosamine to phosphatidylinositol, the first step of GPI biosynthesis. The polypeptide is Phosphatidylinositol N-acetylglucosaminyltransferase subunit GPI1 (GPI1) (Saccharomyces cerevisiae (strain ATCC 204508 / S288c) (Baker's yeast)).